A 346-amino-acid chain; its full sequence is UDP-N-acetylenolpyruvoylglucosamine reductase (346 aa).

In terms of domain architecture, FAD-binding PCMH-type spans 18–189 (LRAQARAFIA…VSVVFALKTH (172 aa)). Residue Arg165 is part of the active site. The active-site Proton donor is Ser240. Glu336 is a catalytic residue.

Belongs to the MurB family. It depends on FAD as a cofactor.

The protein resides in the cytoplasm. The catalysed reaction is UDP-N-acetyl-alpha-D-muramate + NADP(+) = UDP-N-acetyl-3-O-(1-carboxyvinyl)-alpha-D-glucosamine + NADPH + H(+). The protein operates within cell wall biogenesis; peptidoglycan biosynthesis. Functionally, cell wall formation. The chain is UDP-N-acetylenolpyruvoylglucosamine reductase from Neisseria meningitidis serogroup A / serotype 4A (strain DSM 15465 / Z2491).